Reading from the N-terminus, the 224-residue chain is Small ribosomal subunit protein uS5 (224 aa).

Residues 1 to 40 (MAEQPAGGQGAGDSRDSRGDRDSRGRRGDGGRGGRDRDGD) are disordered. A compositionally biased stretch (basic and acidic residues) spans 13–40 (DSRDSRGDRDSRGRRGDGGRGGRDRDGD). In terms of domain architecture, S5 DRBM spans 44–107 (YLERVVAINR…EEARKGFFRV (64 aa)).

The protein belongs to the universal ribosomal protein uS5 family. Part of the 30S ribosomal subunit. Contacts proteins S4 and S8.

Its function is as follows. With S4 and S12 plays an important role in translational accuracy. Functionally, located at the back of the 30S subunit body where it stabilizes the conformation of the head with respect to the body. The chain is Small ribosomal subunit protein uS5 from Mycolicibacterium paratuberculosis (strain ATCC BAA-968 / K-10) (Mycobacterium paratuberculosis).